Consider the following 273-residue polypeptide: LOB domain-containing protein 20 (273 aa).

Residues 1-15 (MADQQRGHNTSDSRR) are compositionally biased toward basic and acidic residues. The disordered stretch occupies residues 1–39 (MADQQRGHNTSDSRRKSLAGKRTSQQTPTSSLSSGGVSM). Positions 23-39 (TSQQTPTSSLSSGGVSM) are enriched in low complexity. Positions 50-152 (SPCGACKFLR…AELSVVQSQL (103 aa)) constitute an LOB domain. The disordered stretch occupies residues 221-248 (LEHSLQPMPPHQQRRGDYQHEDEEESGA).

This sequence belongs to the LOB domain-containing protein family. As to expression, expressed in roots and flowers.

The polypeptide is LOB domain-containing protein 20 (LBD20) (Arabidopsis thaliana (Mouse-ear cress)).